A 312-amino-acid chain; its full sequence is 4-diphosphocytidyl-2-C-methyl-D-erythritol kinase (312 aa).

Lys-16 is an active-site residue. Pro-101 to Ser-111 is an ATP binding site. Asp-143 is a catalytic residue.

The protein belongs to the GHMP kinase family. IspE subfamily.

It carries out the reaction 4-CDP-2-C-methyl-D-erythritol + ATP = 4-CDP-2-C-methyl-D-erythritol 2-phosphate + ADP + H(+). The protein operates within isoprenoid biosynthesis; isopentenyl diphosphate biosynthesis via DXP pathway; isopentenyl diphosphate from 1-deoxy-D-xylulose 5-phosphate: step 3/6. Its function is as follows. Catalyzes the phosphorylation of the position 2 hydroxy group of 4-diphosphocytidyl-2C-methyl-D-erythritol. In Prochlorococcus marinus (strain MIT 9515), this protein is 4-diphosphocytidyl-2-C-methyl-D-erythritol kinase.